The chain runs to 70 residues: DNA-directed RNA polymerase subunit omega (70 aa).

Belongs to the RNA polymerase subunit omega family. In terms of assembly, the RNAP catalytic core consists of 2 alpha, 1 beta, 1 beta' and 1 omega subunit. When a sigma factor is associated with the core the holoenzyme is formed, which can initiate transcription.

It catalyses the reaction RNA(n) + a ribonucleoside 5'-triphosphate = RNA(n+1) + diphosphate. In terms of biological role, promotes RNA polymerase assembly. Latches the N- and C-terminal regions of the beta' subunit thereby facilitating its interaction with the beta and alpha subunits. The polypeptide is DNA-directed RNA polymerase subunit omega (Thermoanaerobacter pseudethanolicus (strain ATCC 33223 / 39E) (Clostridium thermohydrosulfuricum)).